We begin with the raw amino-acid sequence, 165 residues long: NADPH-dependent 7-cyano-7-deazaguanine reductase (165 aa).

The active-site Thioimide intermediate is cysteine 56. The active-site Proton donor is aspartate 63. Substrate is bound by residues 78–80 (VES) and 97–98 (HE).

The protein belongs to the GTP cyclohydrolase I family. QueF type 1 subfamily.

The protein localises to the cytoplasm. It catalyses the reaction 7-aminomethyl-7-carbaguanine + 2 NADP(+) = 7-cyano-7-deazaguanine + 2 NADPH + 3 H(+). It functions in the pathway tRNA modification; tRNA-queuosine biosynthesis. Its function is as follows. Catalyzes the NADPH-dependent reduction of 7-cyano-7-deazaguanine (preQ0) to 7-aminomethyl-7-deazaguanine (preQ1). The protein is NADPH-dependent 7-cyano-7-deazaguanine reductase of Bacillus mycoides (strain KBAB4) (Bacillus weihenstephanensis).